The chain runs to 379 residues: Chaperone protein DnaJ (379 aa).

The 65-residue stretch at 5–69 (EYYERLGVDK…QKRAAYDQYG (65 aa)) folds into the J domain. The segment at 141 to 223 (GVEKQVKYNR…CHGSGHEKVA (83 aa)) adopts a CR-type zinc-finger fold. Residues C154, C157, C171, C174, C197, C200, and C214 each coordinate Zn(2+). CXXCXGXG motif repeat units follow at residues 154-161 (CHTCGGSG), 171-178 (CHKCGGRG), 197-204 (CDVCHGTG), and 211-218 (STTCHGSG).

Belongs to the DnaJ family. Homodimer. Requires Zn(2+) as cofactor.

The protein localises to the cytoplasm. Participates actively in the response to hyperosmotic and heat shock by preventing the aggregation of stress-denatured proteins and by disaggregating proteins, also in an autonomous, DnaK-independent fashion. Unfolded proteins bind initially to DnaJ; upon interaction with the DnaJ-bound protein, DnaK hydrolyzes its bound ATP, resulting in the formation of a stable complex. GrpE releases ADP from DnaK; ATP binding to DnaK triggers the release of the substrate protein, thus completing the reaction cycle. Several rounds of ATP-dependent interactions between DnaJ, DnaK and GrpE are required for fully efficient folding. Also involved, together with DnaK and GrpE, in the DNA replication of plasmids through activation of initiation proteins. The protein is Chaperone protein DnaJ of Lactococcus lactis subsp. cremoris (Streptococcus cremoris).